The following is a 1723-amino-acid chain: Lys-gingipain HG66 (1723 aa).

Positions 1 to 24 (MRKLLLLIAASLLGVGLYAQNAKI) are cleaved as a signal peptide. Residues 25-228 (KLDAPTTRTT…ETAYKQLFNR (204 aa)) constitute a propeptide that is removed on maturation. Asp-313, Asp-337, Asp-339, Phe-341, and Glu-343 together coordinate Ca(2+). His-444 acts as the Proton donor in catalysis. Cys-477 serves as the catalytic Nucleophile. Phe-482 and Glu-491 together coordinate Ca(2+). The disordered stretch occupies residues 965–985 (DAPNGTPNPNPNPNPGTTTLS). Positions 987, 989, 1000, 1002, 1004, 1006, 1021, 1023, 1042, 1145, and 1146 each coordinate Ca(2+).

It belongs to the peptidase C25 family. In terms of processing, proteolytically cleaved into a catalytic subunit and three adhesins. Arg-gingipain is involved in this post-translational processing.

The protein localises to the secreted. The catalysed reaction is Endopeptidase with strict specificity for lysyl bonds.. Its function is as follows. Cysteine proteinase with a strong preference for substrates with Lys in the P1 position. Hydrolyzes bovine hemoglobin, bovine serum albumin, casein, human placental type I collagen and human IgA and IgG. Disrupts the functions of polymorphonuclear leukocytes. May act as a virulence factor in the development of peridontal disease. Involved in the coaggregation of P.gingivalis with other oral bacteria. The polypeptide is Lys-gingipain HG66 (Porphyromonas gingivalis (Bacteroides gingivalis)).